The chain runs to 126 residues: UPF0102 protein HD_0802 (126 aa).

This sequence belongs to the UPF0102 family.

This chain is UPF0102 protein HD_0802, found in Haemophilus ducreyi (strain 35000HP / ATCC 700724).